The sequence spans 92 residues: PqqA binding protein (92 aa).

This sequence belongs to the PqqD family. Monomer. Interacts with PqqE.

It functions in the pathway cofactor biosynthesis; pyrroloquinoline quinone biosynthesis. Its function is as follows. Functions as a PqqA binding protein and presents PqqA to PqqE, in the pyrroloquinoline quinone (PQQ) biosynthetic pathway. This Klebsiella pneumoniae (strain 342) protein is PqqA binding protein.